A 246-amino-acid chain; its full sequence is Sulfate transporter CysZ (246 aa).

A run of 4 helical transmembrane segments spans residues 24 to 44 (LFVL…IGFA), 69 to 89 (IVWP…FTMV), 148 to 168 (LLVL…WILF), and 214 to 234 (LLIP…ATLF).

Belongs to the CysZ family.

Its subcellular location is the cell inner membrane. Its function is as follows. High affinity, high specificity proton-dependent sulfate transporter, which mediates sulfate uptake. Provides the sulfur source for the cysteine synthesis pathway. The sequence is that of Sulfate transporter CysZ from Pseudomonas aeruginosa (strain ATCC 15692 / DSM 22644 / CIP 104116 / JCM 14847 / LMG 12228 / 1C / PRS 101 / PAO1).